Here is a 395-residue protein sequence, read N- to C-terminus: Probable isocitrate dehydrogenase [NAD] gamma 2, mitochondrial (395 aa).

The transit peptide at 1-25 (MLAAGSCSVRTILQPALLLGHSREV) directs the protein to the mitochondrion. Residue Thr-117 coordinates citrate. Substrate contacts are provided by Arg-133, Arg-164, and Asp-251. Asp-251 is a Mn(2+) binding site. Asn-321 provides a ligand contact to ADP.

This sequence belongs to the isocitrate and isopropylmalate dehydrogenases family. In terms of assembly, heterooligomer of subunits alpha (IDH3A), beta (IDH3B), and gamma (IDH3G) in the apparent ratio of 2:1:1. The heterodimer containing one IDH3A and one IDH3B subunit and the heterodimer containing one IDH3A and one IDH3G subunit assemble into a heterotetramer (which contains two subunits of IDH3A, one of IDH3B and one of IDH3G) and further into the heterooctamer. Mg(2+) serves as cofactor. The cofactor is Mn(2+).

The protein resides in the mitochondrion. Its activity is regulated as follows. The heterotetramer and the heterodimer composed of IDH3A and IDH3G subunits can be allosterically activated by citrate (CIT) or/and ADP, and the two activators can act independently or synergistically. The heterodimer composed of IDH3A and IDH3B subunits cannot be allosterically regulated and the allosteric regulation of the heterotetramer is through the IDH3G subunit and not the IDH3B subunit. The IDH3G subunit contains the allosteric site which consists of a CIT-binding site and an ADP-binding site, and the binding of CIT and ADP causes conformational changes at the allosteric site which are transmitted to the active site in the catalytic subunit (IDH3A) through a cascade of conformational changes at the heterodimer interface, leading to stabilization of the isocitrate-binding at the active site and thus activation of the enzyme. ATP can activate the heterotetramer and the heterodimer composed of IDH3A and IDH3G subunits at low concentrations but inhibits their activities at high concentrations, whereas ATP exhibits only inhibitory effect on the heterodimer composed of IDH3A and IDH3B subunits. Its function is as follows. Regulatory subunit which plays a role in the allosteric regulation of the enzyme catalyzing the decarboxylation of isocitrate (ICT) into alpha-ketoglutarate. The heterodimer composed of the alpha (IDH3A) and beta (IDH3B) subunits and the heterodimer composed of the alpha (IDH3A) and gamma (IDH3G) subunits, have considerable basal activity but the full activity of the heterotetramer (containing two subunits of IDH3A, one of IDH3B and one of IDH3G) requires the assembly and cooperative function of both heterodimers. This is Probable isocitrate dehydrogenase [NAD] gamma 2, mitochondrial from Rattus norvegicus (Rat).